Consider the following 199-residue polypeptide: MSYELDPLPYEYDALEPHISEQVLTWHHDTHHQGYVNGWNAAEETLAENREAGEFGSSAGALRNVTHNGSGHILHDLFWQNMSPEGGDEPEGALAERIAEDFGSYEAWKGEFEAAAGAAGGWALLVYDSFSNQLRNVVVDKHDQGALWGSHPILALDVWEHSYYHDYGPARGDFVSAFFEVVDWDEPAARYEQAVELFE.

Positions 28, 75, 157, and 161 each coordinate Mn(2+).

Belongs to the iron/manganese superoxide dismutase family. It depends on Mn(2+) as a cofactor.

The catalysed reaction is 2 superoxide + 2 H(+) = H2O2 + O2. Functionally, destroys superoxide anion radicals which are normally produced within the cells and which are toxic to biological systems. In Haloferax volcanii (strain ATCC 29605 / DSM 3757 / JCM 8879 / NBRC 14742 / NCIMB 2012 / VKM B-1768 / DS2) (Halobacterium volcanii), this protein is Superoxide dismutase [Mn] 2 (sod2).